A 521-amino-acid chain; its full sequence is uncharacterized protein (521 aa).

9 helical membrane-spanning segments follow: residues 53-73 (MISVAGAIGTGLVIGSGSALL), 78-98 (GSLFIAYLMTGINLYVVLISL), 158-178 (NVGIWVAVFLVVILAINLLHV), 186-206 (FWLSAVKILVLVTLIITCIVI), 282-302 (LFRIATFYVIGVFVLGLCVPY), 336-356 (VINACLLVFIISSANSDIYIG), 380-400 (GIPWVGCLVTSSFGLLAFMNT), 407-427 (IFGYFSSAVTVFGTINWINIL), and 487-507 (ITSYIGIAAYVIMILGWKFTF).

It belongs to the amino acid-polyamine-organocation (APC) superfamily.

Its subcellular location is the membrane. This is an uncharacterized protein from Schizosaccharomyces pombe (strain 972 / ATCC 24843) (Fission yeast).